Reading from the N-terminus, the 293-residue chain is 4-diphosphocytidyl-2-C-methyl-D-erythritol kinase (293 aa).

The active site involves Lys-16. 99–109 is a binding site for ATP; sequence PMGAGLGGGSS. Asp-141 is an active-site residue.

This sequence belongs to the GHMP kinase family. IspE subfamily.

It carries out the reaction 4-CDP-2-C-methyl-D-erythritol + ATP = 4-CDP-2-C-methyl-D-erythritol 2-phosphate + ADP + H(+). It functions in the pathway isoprenoid biosynthesis; isopentenyl diphosphate biosynthesis via DXP pathway; isopentenyl diphosphate from 1-deoxy-D-xylulose 5-phosphate: step 3/6. In terms of biological role, catalyzes the phosphorylation of the position 2 hydroxy group of 4-diphosphocytidyl-2C-methyl-D-erythritol. The protein is 4-diphosphocytidyl-2-C-methyl-D-erythritol kinase of Burkholderia ambifaria (strain MC40-6).